Here is a 122-residue protein sequence, read N- to C-terminus: UPF0102 protein RHE_CH00320 (122 aa).

It belongs to the UPF0102 family.

The chain is UPF0102 protein RHE_CH00320 from Rhizobium etli (strain ATCC 51251 / DSM 11541 / JCM 21823 / NBRC 15573 / CFN 42).